Consider the following 60-residue polypeptide: UPF0434 protein YcaR (60 aa).

The protein belongs to the UPF0434 family.

The polypeptide is UPF0434 protein YcaR (Salmonella agona (strain SL483)).